The following is a 360-amino-acid chain: Photosystem II protein D1 1 (360 aa).

3 consecutive transmembrane segments (helical) span residues 29-46 (YVGW…AATV), 118-133 (HFLI…QWEL), and 142-156 (WICV…SATA). Chlorophyll a is bound at residue His-118. Residue Tyr-126 participates in pheophytin a binding. The [CaMn4O5] cluster site is built by Asp-170 and Glu-189. A helical transmembrane segment spans residues 197 to 218 (FHMLGVAGVFGGSLFSAMHGSL). His-198 provides a ligand contact to chlorophyll a. Residues His-215 and 264–265 (SF) contribute to the a quinone site. His-215 lines the Fe cation pocket. His-272 provides a ligand contact to Fe cation. Residues 274–288 (FLAAWPVIGIWFTAL) form a helical membrane-spanning segment. Positions 332, 333, 342, and 344 each coordinate [CaMn4O5] cluster. A propeptide spanning residues 345–360 (AGEVAPVALTAPAING) is cleaved from the precursor.

The protein belongs to the reaction center PufL/M/PsbA/D family. PSII is composed of 1 copy each of membrane proteins PsbA, PsbB, PsbC, PsbD, PsbE, PsbF, PsbH, PsbI, PsbJ, PsbK, PsbL, PsbM, PsbT, PsbX, PsbY, PsbZ, Psb30/Ycf12, peripheral proteins PsbO, CyanoQ (PsbQ), PsbU, PsbV and a large number of cofactors. It forms dimeric complexes. Requires The D1/D2 heterodimer binds P680, chlorophylls that are the primary electron donor of PSII, and subsequent electron acceptors. It shares a non-heme iron and each subunit binds pheophytin, quinone, additional chlorophylls, carotenoids and lipids. D1 provides most of the ligands for the Mn4-Ca-O5 cluster of the oxygen-evolving complex (OEC). There is also a Cl(-1) ion associated with D1 and D2, which is required for oxygen evolution. The PSII complex binds additional chlorophylls, carotenoids and specific lipids. as cofactor. Tyr-161 forms a radical intermediate that is referred to as redox-active TyrZ, YZ or Y-Z. In terms of processing, C-terminally processed by CtpA; processing is essential to allow assembly of the oxygen-evolving complex and thus photosynthetic growth.

Its subcellular location is the cellular thylakoid membrane. It carries out the reaction 2 a plastoquinone + 4 hnu + 2 H2O = 2 a plastoquinol + O2. Photosystem II (PSII) is a light-driven water:plastoquinone oxidoreductase that uses light energy to abstract electrons from H(2)O, generating O(2) and a proton gradient subsequently used for ATP formation. It consists of a core antenna complex that captures photons, and an electron transfer chain that converts photonic excitation into a charge separation. The D1/D2 (PsbA/PsbD) reaction center heterodimer binds P680, the primary electron donor of PSII as well as several subsequent electron acceptors. This is Photosystem II protein D1 1 from Nostoc sp. (strain PCC 7120 / SAG 25.82 / UTEX 2576).